Reading from the N-terminus, the 468-residue chain is MAISVDQTPAGKYPAKVHAKRVAARIQELGHGDSGIIYLEGQKTHMIEDSDGEMPFRQRRNFFYLSGCPLPDSYLTYDIKADKLTIFIPPIDPASVIWSGLPLSVEEALEIYDVDAVLSTAEVNASLAHYCSAQGGKKVFAIADQVSPHITFLPFQEIDFDVLKRAVEESRVVKDSYEIALLRRANEISSKAHVAVFKAATSARNERELEAIFVGACMSSGCREQSYHPIFASGTNAATLHYQKNDEDLVDSVTGQRRLNMLIDAGAEYRNYCADITRVVPLSGKFSPESREIYDIVLEMQNSSLAMIKAGVMWEDVHSTSHRVAIRGLLKLGILRSTEDELFEKGISVAFFPHGLGHYLGMDTHDTGGNPNYADKDPKFKYLRLRGPLASGGVVTVEPGIYFCRFIIDPYLSSPDLGKYINADVLERYWSVGGVRIEDNVVVTDSGYDNLTTAPKLPEEIERLATEK.

Mn(2+) is bound by residues aspartate 264, aspartate 275, glutamate 398, and glutamate 438.

It belongs to the peptidase M24B family. Mn(2+) serves as cofactor.

It catalyses the reaction Release of any N-terminal amino acid, including proline, that is linked to proline, even from a dipeptide or tripeptide.. Catalyzes the removal of a penultimate prolyl residue from the N-termini of peptides. The polypeptide is Probable Xaa-Pro aminopeptidase PEPP (PEPP) (Paracoccidioides brasiliensis (strain Pb03)).